The sequence spans 508 residues: 2,3-bisphosphoglycerate-independent phosphoglycerate mutase (508 aa).

Mn(2+) contacts are provided by Asp13 and Ser63. The Phosphoserine intermediate role is filled by Ser63. Substrate-binding positions include His122, 152-153, Arg184, Arg190, 256-259, and Lys330; these read RD and RADR. 5 residues coordinate Mn(2+): Asp397, His401, Asp438, His439, and His457.

This sequence belongs to the BPG-independent phosphoglycerate mutase family. In terms of assembly, monomer. Requires Mn(2+) as cofactor.

It carries out the reaction (2R)-2-phosphoglycerate = (2R)-3-phosphoglycerate. It participates in carbohydrate degradation; glycolysis; pyruvate from D-glyceraldehyde 3-phosphate: step 3/5. In terms of biological role, catalyzes the interconversion of 2-phosphoglycerate and 3-phosphoglycerate. The protein is 2,3-bisphosphoglycerate-independent phosphoglycerate mutase of Laribacter hongkongensis (strain HLHK9).